An 899-amino-acid polypeptide reads, in one-letter code: Ewing's tumor-associated antigen 1 homolog (899 aa).

Positions 1 to 82 are disordered; it reads MSRRRKHGDS…TEERYETPKR (82 aa). The span at 71–81 shows a compositional bias: basic and acidic residues; it reads SNTEERYETPK. An ATR-activation domain (AAD) motif is present at residues 105–111; that stretch reads IFWDQNS. Positions 180–210 form a coiled coil; that stretch reads TKLKSQNQEEELMKLAKQFDKNMEELDVIQE. Residues Lys416 and Lys444 each participate in a glycyl lysine isopeptide (Lys-Gly) (interchain with G-Cter in SUMO2) cross-link. Position 467 is a phosphoserine (Ser467). Residues Lys485 and Lys539 each participate in a glycyl lysine isopeptide (Lys-Gly) (interchain with G-Cter in SUMO2) cross-link. The RBM1 motif motif lies at 607–622; the sequence is DDVDDDILYQACDDIE. Ser810 is modified (phosphoserine). Positions 833 to 899 are disordered; sequence NKTVNPLPGK…AQASSVKKGR (67 aa). The span at 859–877 shows a compositional bias: basic and acidic residues; the sequence is PSKEEEEKNRKCSPEEIQR. The RBM2 motif signature appears at 868-890; it reads RKCSPEEIQRKRQAALIRRMAKA.

Interacts (via RBM1 motif) with RPA1. Interacts (via RBM2 motif) with RPA2. Interacts (via the ATR-activation domain motif) with ATR. In terms of processing, phosphorylated by ATR.

It is found in the nucleus. Replication stress response protein that accumulates at DNA damage sites and promotes replication fork progression and integrity. Recruited to stalled replication forks via interaction with the RPA complex and directly stimulates ATR kinase activity independently of TOPBP1. Probably only regulates a subset of ATR targets. This is Ewing's tumor-associated antigen 1 homolog from Bos taurus (Bovine).